The primary structure comprises 158 residues: NAD(P)H-quinone oxidoreductase subunit J, chloroplastic (158 aa).

It belongs to the complex I 30 kDa subunit family. As to quaternary structure, NDH is composed of at least 16 different subunits, 5 of which are encoded in the nucleus.

It is found in the plastid. The protein localises to the chloroplast thylakoid membrane. It carries out the reaction a plastoquinone + NADH + (n+1) H(+)(in) = a plastoquinol + NAD(+) + n H(+)(out). It catalyses the reaction a plastoquinone + NADPH + (n+1) H(+)(in) = a plastoquinol + NADP(+) + n H(+)(out). Its function is as follows. NDH shuttles electrons from NAD(P)H:plastoquinone, via FMN and iron-sulfur (Fe-S) centers, to quinones in the photosynthetic chain and possibly in a chloroplast respiratory chain. The immediate electron acceptor for the enzyme in this species is believed to be plastoquinone. Couples the redox reaction to proton translocation, and thus conserves the redox energy in a proton gradient. This is NAD(P)H-quinone oxidoreductase subunit J, chloroplastic from Trachelium caeruleum (Blue throatwort).